We begin with the raw amino-acid sequence, 177 residues long: Large ribosomal subunit protein uL6 (177 aa).

In terms of assembly, part of the 50S ribosomal subunit.

Functionally, this protein binds to the 23S rRNA, and is important in its secondary structure. It is located near the subunit interface in the base of the L7/L12 stalk, and near the tRNA binding site of the peptidyltransferase center. This Rhodopseudomonas palustris (strain ATCC BAA-98 / CGA009) protein is Large ribosomal subunit protein uL6.